A 331-amino-acid polypeptide reads, in one-letter code: L-lactate dehydrogenase A chain (331 aa).

NAD(+) is bound by residues 29–57 and Arg98; that span reads GMVG…MEDK. Substrate-binding residues include Arg105, Asn137, and Arg168. Residue Asn137 participates in NAD(+) binding. The active-site Proton acceptor is the His192. Residue Thr247 coordinates substrate.

The protein belongs to the LDH/MDH superfamily. LDH family. As to quaternary structure, homotetramer.

It localises to the cytoplasm. The enzyme catalyses (S)-lactate + NAD(+) = pyruvate + NADH + H(+). It functions in the pathway fermentation; pyruvate fermentation to lactate; (S)-lactate from pyruvate: step 1/1. Interconverts simultaneously and stereospecifically pyruvate and lactate with concomitant interconversion of NADH and NAD(+). The protein is L-lactate dehydrogenase A chain (ldha) of Patagonotothen tessellata (Black southern cod).